Here is a 275-residue protein sequence, read N- to C-terminus: Protein FAM210A (275 aa).

Residues 68 to 108 form a disordered region; sequence SSQPADTPRKVPEEREPLTSATEVPKQSPVESDASDPDPLQ. The span at 74–84 shows a compositional bias: basic and acidic residues; sequence TPRKVPEEREP. The 113-residue stretch at 109–221 folds into the DUF1279 domain; sequence DKSISLVQRF…GYMSTPPPVK (113 aa). Residues 128 to 148 form a helical membrane-spanning segment; the sequence is VMIPVHLVTSTVWFGSFYYAA. The stretch at 221–271 forms a coiled coil; that stretch reads KEYLQDRMEETKDKITEKMEETKDKITEKMEETKDKITEKIQETKDKVSFK.

This sequence belongs to the FAM210 family. In terms of assembly, interacts with ATAD3A.

It is found in the membrane. The protein localises to the mitochondrion. It localises to the cytoplasm. In terms of biological role, may play a role in the structure and strength of both muscle and bone. This Gallus gallus (Chicken) protein is Protein FAM210A (FAM210A).